Reading from the N-terminus, the 365-residue chain is Galactoside alpha-(1,2)-fucosyltransferase 1 (365 aa).

The Cytoplasmic portion of the chain corresponds to 1 to 8 (MWLRSHRQ). A helical; Signal-anchor for type II membrane protein transmembrane segment spans residues 9-25 (LCLAFLLVCVLSVIFFL). Topologically, residues 26–365 (HIHQDSFPHG…LSPLWTLAKP (340 aa)) are lumenal. N-linked (GlcNAc...) asparagine glycans are attached at residues Asn-65 and Asn-327.

Belongs to the glycosyltransferase 11 family.

The protein localises to the golgi apparatus. It is found in the golgi stack membrane. The enzyme catalyses a beta-D-galactosyl-(1-&gt;4)-N-acetyl-beta-D-glucosaminyl derivative + GDP-beta-L-fucose = an alpha-L-Fuc-(1-&gt;2)-beta-D-Gal-(1-&gt;4)-beta-D-GlcNAc derivative + GDP + H(+). It catalyses the reaction a ganglioside GA1 + GDP-beta-L-fucose = a ganglioside Fuc-GA1 + GDP + H(+). The catalysed reaction is a beta-D-Gal-(1-&gt;3)-beta-D-GlcNAc-(1-&gt;3)-beta-D-Gal-(1-&gt;4)-beta-D-Glc-(1&lt;-&gt;1')-Cer(d18:1(4E)) + GDP-beta-L-fucose = alpha-L-fucosyl-(1-&gt;2)- beta-D-galactosyl-(1-&gt;3)-N-acetyl-beta-D-glucosaminyl-(1-&gt;3)-beta-D-galactosyl-(1-&gt;4)-beta-D-glucosyl-(1&lt;-&gt;1')-N-acylsphing-4-enine + GDP + H(+). It carries out the reaction a neolactoside nLc4Cer(d18:1(4E)) + GDP-beta-L-fucose = a neolactoside IV(2)-alpha-Fuc-nLc4Cer(d18:1(4E)) + GDP + H(+). The enzyme catalyses a ganglioside GM1 + GDP-beta-L-fucose = a ganglioside Fuc-GM1 + GDP + H(+). It catalyses the reaction beta-D-galactosyl-(1-&gt;3)-N-acetyl-D-galactosamine + GDP-beta-L-fucose = alpha-L-fucosyl-(1-&gt;2)-beta-D-galactosyl-(1-&gt;3)-N-acetyl-D-galactosamine + GDP + H(+). It participates in protein modification; protein glycosylation. Functionally, catalyzes the transfer of L-fucose, from a guanosine diphosphate-beta-L-fucose, to the terminal galactose residue of glycoconjugates through an alpha(1,2) linkage leading to H antigen synthesis that is an intermediate substrate in the synthesis of ABO blood group antigens. H antigen is essential for maturation of the glomerular layer of the main olfactory bulb, in cell migration and early cell-cell contacts during tumor associated angiogenesis. Preferentially fucosylates soluble lactose and to a lesser extent fucosylates glycolipids gangliosides GA1 and GM1a. The sequence is that of Galactoside alpha-(1,2)-fucosyltransferase 1 from Homo sapiens (Human).